Consider the following 317-residue polypeptide: Putative toluene-4-sulfonate monooxygenase system reductase subunit TsaB2 (317 aa).

Residues 4-106 (DVPVTVAAVR…SAPRNLFEMA (103 aa)) enclose the FAD-binding FR-type domain. Position 110 to 220 (110 to 220 (RRVLLLAGGI…PGSVRMERFK (111 aa))) interacts with NAD(+). Residues 232–317 (FELVLQRAGL…CGGGRLVLDI (86 aa)) form the 2Fe-2S ferredoxin-type domain. 3 residues coordinate [2Fe-2S] cluster: cysteine 266, cysteine 271, and cysteine 274.

Monomer. Part of the p-toluenesulfonate methyl-monooxygenase complex TsaBM, comprising the reductase TsaB and the oxygenase TsaM. FMN serves as cofactor.

In terms of biological role, involved in the toluene-4-sulfonate degradation pathway. The sequence is that of Putative toluene-4-sulfonate monooxygenase system reductase subunit TsaB2 (tsaB2) from Comamonas testosteroni (Pseudomonas testosteroni).